The primary structure comprises 522 residues: MLVNILSKKPRAASVRWLGATVLFTLLTSPAWAFSIDDVAKQAQDLAGKGFEAPKSNLPSQFREMKFADYQQIQFNHDKAYWSKLKTPFKLEFYHQGMYFDTPVKINEVTSTTVKQIKYSPDYFNFGSVKHDPDSVKNLGFAGFKVIYPINSADKNDEIMSLLGASYFRVVGKGQVYGISARGLAIDTALPSGEEFPRFREFWVERPKQGDKHLVIYALLDSPRATGAYRFVVYPGRDTTVDVESKVFLRDKVGKLGMAPLTSMYLFGPNQPSPTLNYRPALHDSNGLSIHAGNGEWIWRPLNNPKHLSVSTYQVENPKGFGLLQRGRNFKDYEDLDDRYDLRPSAWIEPRGDWGKGKVELVEIPTADETNDNIVAFWTPDVLPDAKTPLALNYRLHFTRDEDKLHSQDIAYVSQTMRSTGDVKQSNLIREPDGSVAFLVDFVGPVLKGLDGATPVAAQVSIGDNGEMVENNVRYNPVTKGWRLTLRLKVKDDKKPVEMRAALVNGDKTLSETWSYQLPANE.

A signal peptide spans 1 to 33 (MLVNILSKKPRAASVRWLGATVLFTLLTSPAWA).

This sequence belongs to the OpgD/OpgG family.

The protein resides in the periplasm. It functions in the pathway glycan metabolism; osmoregulated periplasmic glucan (OPG) biosynthesis. Involved in the biosynthesis of osmoregulated periplasmic glucans (OPGs). The polypeptide is Glucans biosynthesis protein G (Serratia proteamaculans (strain 568)).